A 193-amino-acid polypeptide reads, in one-letter code: Potassium-transporting ATPase KdpC subunit (193 aa).

Residues 10–30 traverse the membrane as a helical segment; sequence AAIIIFSVLTGVIYPALVTVI.

Belongs to the KdpC family. The system is composed of three essential subunits: KdpA, KdpB and KdpC.

The protein localises to the cell membrane. Part of the high-affinity ATP-driven potassium transport (or Kdp) system, which catalyzes the hydrolysis of ATP coupled with the electrogenic transport of potassium into the cytoplasm. This subunit acts as a catalytic chaperone that increases the ATP-binding affinity of the ATP-hydrolyzing subunit KdpB by the formation of a transient KdpB/KdpC/ATP ternary complex. The chain is Potassium-transporting ATPase KdpC subunit from Herpetosiphon aurantiacus (strain ATCC 23779 / DSM 785 / 114-95).